The sequence spans 151 residues: 3-dehydroquinate dehydratase (151 aa).

The active-site Proton acceptor is tyrosine 24. Asparagine 76, histidine 82, and aspartate 89 together coordinate substrate. Histidine 102 functions as the Proton donor in the catalytic mechanism. Substrate is bound by residues 103 to 104 (VS) and arginine 113.

The protein belongs to the type-II 3-dehydroquinase family. Homododecamer.

It carries out the reaction 3-dehydroquinate = 3-dehydroshikimate + H2O. Its pathway is metabolic intermediate biosynthesis; chorismate biosynthesis; chorismate from D-erythrose 4-phosphate and phosphoenolpyruvate: step 3/7. Functionally, catalyzes a trans-dehydration via an enolate intermediate. The chain is 3-dehydroquinate dehydratase from Rhodopseudomonas palustris (strain ATCC BAA-98 / CGA009).